A 411-amino-acid chain; its full sequence is RNA binding protein fox-1 homolog 2 (411 aa).

The disordered stretch occupies residues T16–L175. Polar residues-rich tracts occupy residues P58–T83 and N99–E119. The segment covering S135–N165 has biased composition (low complexity). The RRM domain occupies K173 to A249.

Interacts with papd4/gld2.

Its subcellular location is the nucleus. The protein resides in the cytoplasm. In terms of biological role, RNA-binding protein that regulates alternative splicing events by binding to 5'-UGCAUGU-3' elements. Regulates alternative splicing of tissue-specific exons. The polypeptide is RNA binding protein fox-1 homolog 2 (rbfox2) (Xenopus laevis (African clawed frog)).